The sequence spans 789 residues: Ent-kaurene synthase TSP4, chloroplastic (789 aa).

Positions 540 and 544 each coordinate Mg(2+). The DDXXD motif signature appears at 540–544; that stretch reads DDFFD. The helical transmembrane segment at 638–656 threads the bilayer; the sequence is AYVSFALGPIVLPALYLVG. Mg(2+) contacts are provided by Asn-684, Arg-687, and Glu-692.

This sequence belongs to the terpene synthase family. It depends on Mg(2+) as a cofactor. As to expression, expressed in leaves and fruits, including trichomes.

It localises to the plastid. The protein resides in the chloroplast membrane. It catalyses the reaction ent-copalyl diphosphate = ent-kaur-16-ene + diphosphate. Its pathway is plant hormone biosynthesis; gibberellin biosynthesis. Functionally, involved in the biosynthesis of labdane-type diterpenoid including cleroda-dienols, and peregrinol lactones and furan derivatives, dopaminergic diterpenoids that can bind to dopamine receptors in the human pituitary gland, have probably ability to lower prolactin levels, and are used to treat menstrual cycle disorders (e.g. premenstrual syndrome and mastodynia). Terpene synthase that produces ent-kaurene from ent-copalyl diphosphate. This chain is Ent-kaurene synthase TSP4, chloroplastic, found in Vitex agnus-castus (Chaste tree).